A 256-amino-acid chain; its full sequence is Acetoacetate decarboxylase 3 (256 aa).

The active-site Schiff-base intermediate with acetoacetate is the Lys110.

This sequence belongs to the ADC family.

The enzyme catalyses acetoacetate + H(+) = acetone + CO2. Its function is as follows. Catalyzes the conversion of acetoacetate to acetone and carbon dioxide. In Mesorhizobium japonicum (strain LMG 29417 / CECT 9101 / MAFF 303099) (Mesorhizobium loti (strain MAFF 303099)), this protein is Acetoacetate decarboxylase 3.